We begin with the raw amino-acid sequence, 254 residues long: RING-H2 finger protein ATL28 (254 aa).

A helical transmembrane segment spans residues Val-25–Trp-45. The segment at Cys-103–Arg-145 adopts an RING-type; atypical zinc-finger fold.

It belongs to the RING-type zinc finger family. ATL subfamily.

The protein resides in the membrane. It catalyses the reaction S-ubiquitinyl-[E2 ubiquitin-conjugating enzyme]-L-cysteine + [acceptor protein]-L-lysine = [E2 ubiquitin-conjugating enzyme]-L-cysteine + N(6)-ubiquitinyl-[acceptor protein]-L-lysine.. It functions in the pathway protein modification; protein ubiquitination. The polypeptide is RING-H2 finger protein ATL28 (ATL28) (Arabidopsis thaliana (Mouse-ear cress)).